The chain runs to 151 residues: Large ribosomal subunit protein bL9 (151 aa).

Belongs to the bacterial ribosomal protein bL9 family.

Functionally, binds to the 23S rRNA. The polypeptide is Large ribosomal subunit protein bL9 (Nitrosospira multiformis (strain ATCC 25196 / NCIMB 11849 / C 71)).